A 642-amino-acid chain; its full sequence is Influenza virus NS1A-binding protein (642 aa).

Residues 1–131 form the BTB domain; sequence MIPNGYLMFE…GDYLLSRMDV (131 aa). A BACK domain is found at 132–350; the sequence is TSCISYRNFA…MQQDELIEKP (219 aa). The interval 164–368 is sufficient for AHR interaction and signaling; sequence ISEEEEFLKL…SGLGTAEMNG (205 aa). 5 positions are modified to phosphoserine: S246, S277, S322, S336, and S338. Positions 257–281 are disordered; that stretch reads KPPRENGHKQISSSSTGCLSSPNAT. The span at 265-281 shows a compositional bias: polar residues; it reads KQISSSSTGCLSSPNAT. Kelch repeat units lie at residues 384-421, 432-469, 481-518, 527-565, 575-612, and 622-642; these read TVEC…YVVG, CGEM…YIVG, NCDV…YIIG, NTVE…FVCG, CVEM…YAVG, and TVEV…IFQF.

The protein belongs to the BTB-kelch protein family. As to quaternary structure, homodimer; through the BTB domain. Interacts with AHR/Aryl hydrocarbon receptor. Interacts (via BACK domain) with pre-mRNA-binding protein HNRNPK; the interaction is direct. Interacts (via BACK domain) with splicing factor PTBP1; the interaction is direct. Interacts (via Kelch repeats) with RNA polymerase POLR2A (via C-terminal domain). Interacts (via BACK domain) with splicing factor SNRPA; the interaction is indirect. Interacts (via Kelch repeats) with splicing factor SART1. Interacts (via BACK domain) with ALYREF; the interaction is indirect and likely plays a role in mRNA nuclear export. Interacts (via Kelch repeats) with KLHL20 (via Kelch repeats); this interaction blocks the assembly of Cul3-KLHL20 complex. (Microbial infection) Interacts (via BACK domain) with influenza A virus non-structural protein 1 (NS1); the interaction is direct and bridges the interaction between NS1 and HNRNPK.

The protein localises to the cytoplasm. It localises to the cytoskeleton. Its subcellular location is the nucleus. The protein resides in the nucleoplasm. Involved in many cell functions, including pre-mRNA splicing, the aryl hydrocarbon receptor (AHR) pathway, F-actin organization and protein ubiquitination. Plays a role in the dynamic organization of the actin skeleton as a stabilizer of actin filaments by association with F-actin through Kelch repeats. Protects cells from cell death induced by actin destabilization. Functions as modifier of the AHR/Aryl hydrocarbon receptor pathway increasing the concentration of AHR available to activate transcription. In addition, functions as a negative regulator of BCR(KLHL20) E3 ubiquitin ligase complex to prevent ubiquitin-mediated proteolysis of PML and DAPK1, two tumor suppressors. Inhibits pre-mRNA splicing (in vitro). May play a role in mRNA nuclear export. Its function is as follows. (Microbial infection) Involved in the alternative splicing of influenza A virus M1 mRNA through interaction with HNRNPK, thereby facilitating the generation of viral M2 protein. The BTB and Kelch domains are required for splicing activity. Promotes export of viral M mRNA and RNP via its interaction with mRNA export factor ALYREF. The sequence is that of Influenza virus NS1A-binding protein from Homo sapiens (Human).